A 92-amino-acid chain; its full sequence is RNA-binding protein Hfq (92 aa).

In terms of domain architecture, Sm spans 9-68 (DPFLNALRRERVPVSIYLVNGIKLQGQVESFDQFVILLKNTVSQMVYKHAISTVVPSRPF).

It belongs to the Hfq family. As to quaternary structure, homohexamer.

Its function is as follows. RNA chaperone that binds small regulatory RNA (sRNAs) and mRNAs to facilitate mRNA translational regulation in response to envelope stress, environmental stress and changes in metabolite concentrations. Also binds with high specificity to tRNAs. This chain is RNA-binding protein Hfq, found in Shewanella piezotolerans (strain WP3 / JCM 13877).